The primary structure comprises 603 residues: UvrABC system protein C (603 aa).

Residues 14 to 92 (ELPGVYRMLD…IKSLAPRYNI (79 aa)) form the GIY-YIG domain. Residues 201 to 236 (QEVTRRLTKSMEEASAKLAFEQAAVFRDQIQSLHQV) form the UVR domain.

It belongs to the UvrC family. As to quaternary structure, interacts with UvrB in an incision complex.

Its subcellular location is the cytoplasm. In terms of biological role, the UvrABC repair system catalyzes the recognition and processing of DNA lesions. UvrC both incises the 5' and 3' sides of the lesion. The N-terminal half is responsible for the 3' incision and the C-terminal half is responsible for the 5' incision. This chain is UvrABC system protein C, found in Dechloromonas aromatica (strain RCB).